Reading from the N-terminus, the 206-residue chain is Pyridoxine/pyridoxamine 5'-phosphate oxidase (206 aa).

Residues Arg-53–Lys-58, Tyr-68–Thr-69, Lys-75, and Gln-97 contribute to the FMN site. A substrate-binding site is contributed by Lys-58. 3 residues coordinate substrate: Tyr-115, Arg-119, and Ser-123. Residues Gln-132–Ser-133 and Trp-177 each bind FMN. Position 183–185 (Arg-183–His-185) interacts with substrate. Arg-187 provides a ligand contact to FMN.

The protein belongs to the pyridoxamine 5'-phosphate oxidase family. As to quaternary structure, homodimer. It depends on FMN as a cofactor.

It carries out the reaction pyridoxamine 5'-phosphate + O2 + H2O = pyridoxal 5'-phosphate + H2O2 + NH4(+). The catalysed reaction is pyridoxine 5'-phosphate + O2 = pyridoxal 5'-phosphate + H2O2. Its pathway is cofactor metabolism; pyridoxal 5'-phosphate salvage; pyridoxal 5'-phosphate from pyridoxamine 5'-phosphate: step 1/1. It participates in cofactor metabolism; pyridoxal 5'-phosphate salvage; pyridoxal 5'-phosphate from pyridoxine 5'-phosphate: step 1/1. In terms of biological role, catalyzes the oxidation of either pyridoxine 5'-phosphate (PNP) or pyridoxamine 5'-phosphate (PMP) into pyridoxal 5'-phosphate (PLP). The protein is Pyridoxine/pyridoxamine 5'-phosphate oxidase of Allorhizobium ampelinum (strain ATCC BAA-846 / DSM 112012 / S4) (Agrobacterium vitis (strain S4)).